The sequence spans 580 residues: Rho guanine nucleotide exchange factor 25 (580 aa).

Residues 48 to 67 (AASGLAAPSGPSSGLSSGPC) are compositionally biased toward low complexity. 2 disordered regions span residues 48-76 (AASG…GPVS) and 128-157 (LEGP…KKKA). Residues 160–336 (RSMYVLSELV…CFVPKRCNDM (177 aa)) enclose the DH domain. An important for binding to Rho GTPases region spans residues 278-299 (LGHRLQLNDLLIKPVQRIMKYQ). Positions 348 to 466 (KLTAQGKLLG…WIKHVAQILE (119 aa)) constitute a PH domain. Residues 467–493 (SQRDFLNALQSPIEYQRRESQTNSLGR) form a sufficient to bind activated GNAQ region. Disordered stretches follow at residues 482–524 (QRRE…GSLP) and 545–580 (ALGD…EDEL). Residues 509–520 (DQAQGSTHTPIN) show a composition bias toward polar residues. Pro residues predominate over residues 555 to 566 (DSPPVSPTPKTP).

Interacts (via the DH domain) with POPDC1 (via the C-terminus cytoplasmic tail). Interacts with activated GNAQ and GNA11. Interacts with RHOA, CDC42 and RAC1. As to expression, isoform 1 and isoform 2 are highly expressed in excitable tissues, such as brain, heart and muscle. Also detected in kidney and liver.

The protein resides in the cell membrane. The protein localises to the cytoplasm. It localises to the myofibril. It is found in the sarcomere. In terms of biological role, may play a role in actin cytoskeleton reorganization in different tissues since its activation induces formation of actin stress fibers. It works as a guanine nucleotide exchange factor for Rho family of small GTPases. Links specifically G alpha q/11-coupled receptors to RHOA activation. May be an important regulator of processes involved in axon and dendrite formation. In neurons seems to be an exchange factor primarily for RAC1. Involved in skeletal myogenesis. The polypeptide is Rho guanine nucleotide exchange factor 25 (ARHGEF25) (Homo sapiens (Human)).